The chain runs to 79 residues: Conotoxin VnMKLT1-01121 (79 aa).

Residues 1-22 form the signal peptide; sequence MKLTCMMIVAVLFLTAWTFVTA. A propeptide spanning residues 23–48 is cleaved from the precursor; sequence DDSRNGLEYLFPKAHYEMNPEASKLN. Disulfide bonds link cysteine 53/cysteine 70, cysteine 60/cysteine 74, and cysteine 69/cysteine 78.

It belongs to the conotoxin O1 superfamily. In terms of tissue distribution, expressed by the venom duct.

Its subcellular location is the secreted. The chain is Conotoxin VnMKLT1-01121 from Conus ventricosus (Mediterranean cone).